Reading from the N-terminus, the 314-residue chain is DNA-directed RNA polymerase subunit alpha (314 aa).

The interval 1-228 is alpha N-terminal domain (alpha-NTD); it reads MIEFEKPNIH…DHLSIFVNLT (228 aa). Positions 245-314 are alpha C-terminal domain (alpha-CTD); it reads KEKMLEMTIE…DLGLSLRKED (70 aa).

Belongs to the RNA polymerase alpha chain family. In terms of assembly, homodimer. The RNAP catalytic core consists of 2 alpha, 1 beta, 1 beta' and 1 omega subunit. When a sigma factor is associated with the core the holoenzyme is formed, which can initiate transcription.

The catalysed reaction is RNA(n) + a ribonucleoside 5'-triphosphate = RNA(n+1) + diphosphate. In terms of biological role, DNA-dependent RNA polymerase catalyzes the transcription of DNA into RNA using the four ribonucleoside triphosphates as substrates. In Lactiplantibacillus plantarum (strain ATCC BAA-793 / NCIMB 8826 / WCFS1) (Lactobacillus plantarum), this protein is DNA-directed RNA polymerase subunit alpha.